The chain runs to 409 residues: Arginine biosynthesis bifunctional protein ArgJ (409 aa).

Thr156, Lys182, Thr193, Glu280, Asn404, and Ser409 together coordinate substrate. Thr193 (nucleophile) is an active-site residue.

Belongs to the ArgJ family. Heterotetramer of two alpha and two beta chains.

It is found in the cytoplasm. The enzyme catalyses N(2)-acetyl-L-ornithine + L-glutamate = N-acetyl-L-glutamate + L-ornithine. It catalyses the reaction L-glutamate + acetyl-CoA = N-acetyl-L-glutamate + CoA + H(+). It participates in amino-acid biosynthesis; L-arginine biosynthesis; L-ornithine and N-acetyl-L-glutamate from L-glutamate and N(2)-acetyl-L-ornithine (cyclic): step 1/1. Its pathway is amino-acid biosynthesis; L-arginine biosynthesis; N(2)-acetyl-L-ornithine from L-glutamate: step 1/4. Catalyzes two activities which are involved in the cyclic version of arginine biosynthesis: the synthesis of N-acetylglutamate from glutamate and acetyl-CoA as the acetyl donor, and of ornithine by transacetylation between N(2)-acetylornithine and glutamate. This is Arginine biosynthesis bifunctional protein ArgJ from Nitrosomonas europaea (strain ATCC 19718 / CIP 103999 / KCTC 2705 / NBRC 14298).